A 419-amino-acid polypeptide reads, in one-letter code: Synaptosomal-associated protein 47 (419 aa).

2 consecutive t-SNARE coiled-coil homology domains span residues 108–170 (PQGA…LSEL) and 356–418 (VLQP…MRKL).

It belongs to the SVAP1 family.

Functionally, may play a role in intracellular membrane fusion. This Danio rerio (Zebrafish) protein is Synaptosomal-associated protein 47 (snap47).